A 555-amino-acid polypeptide reads, in one-letter code: Intraflagellar transport protein 56 (555 aa).

TPR repeat units follow at residues 57 to 90 (LKNLEWLAYCYFHYGEHDKALVIYKELLQHEDPD), 151 to 184 (IEDQLTLASIHYQRSHFQEATDIYKRLLLEHRDY), and 393 to 426 (DDFNWNLGIAKAATGKYKEAEETLLQIANDKYRN).

Belongs to the IFT56 family. As to quaternary structure, component of the IFT complex B.

The protein resides in the cell projection. It localises to the cilium. It is found in the flagellum. In terms of biological role, component of the intraflagellar transport (IFT) complex B required for transport of proteins in the motile cilium. Required for transport of specific ciliary cargo proteins related to motility, while it is neither required for IFT complex B assembly or motion nor for cilium assembly. In Chlamydomonas reinhardtii (Chlamydomonas smithii), this protein is Intraflagellar transport protein 56.